The sequence spans 115 residues: MTQLLVTTTENIPGHPYEVIGEVFGLTTQSKNLVRNIGAGLKGLVGGEIKDYTKMLEESRDVAVNRLRDNASAMGADAVVMMRFDTGSISQDMQSVAAYGTAVRFITEDLTTDNA.

It belongs to the UPF0145 family.

This is UPF0145 protein lp_2083 from Lactiplantibacillus plantarum (strain ATCC BAA-793 / NCIMB 8826 / WCFS1) (Lactobacillus plantarum).